The sequence spans 114 residues: WRMIWEHNTRNIIMLTQTVEKGKIKCDHYWPFDNEPIVSGDITIQMTSESMLPEWTIREFKITHGANTRRVRQFHYTVWPDHGVPETTETLVKFIRYVRRTIDGEAKHTGPTIV.

The Tyrosine-protein phosphatase domain maps to 1–114 (WRMIWEHNTR…EAKHTGPTIV (114 aa)). A substrate-binding site is contributed by aspartate 81.

It belongs to the protein-tyrosine phosphatase family.

It carries out the reaction O-phospho-L-tyrosyl-[protein] + H2O = L-tyrosyl-[protein] + phosphate. The chain is Tyrosine-protein phosphatase 11 (STY-11) from Styela plicata (Wrinkled sea squirt).